Here is a 100-residue protein sequence, read N- to C-terminus: Large ribosomal subunit protein uL23 (100 aa).

The protein belongs to the universal ribosomal protein uL23 family. Part of the 50S ribosomal subunit. Contacts protein L29, and trigger factor when it is bound to the ribosome.

In terms of biological role, one of the early assembly proteins it binds 23S rRNA. One of the proteins that surrounds the polypeptide exit tunnel on the outside of the ribosome. Forms the main docking site for trigger factor binding to the ribosome. The sequence is that of Large ribosomal subunit protein uL23 from Pectobacterium atrosepticum (strain SCRI 1043 / ATCC BAA-672) (Erwinia carotovora subsp. atroseptica).